Here is a 734-residue protein sequence, read N- to C-terminus: Photosystem I P700 chlorophyll a apoprotein A2 (734 aa).

Transmembrane regions (helical) follow at residues 46-69 (IFAS…FHVA), 135-158 (LYTG…LHLQ), 175-199 (LNHH…HVAI), 273-291 (IAHH…GHMY), 330-353 (IHFQ…QHMY), 369-395 (AALY…IFFI), 417-439 (AIIS…LYVH), and 517-535 (FLVH…LILV). Residues Cys-559 and Cys-568 each coordinate [4Fe-4S] cluster. Helical transmembrane passes span 575–596 (AFYL…YWHW) and 643–665 (LSVW…MFLI). Positions 654, 662, and 670 each coordinate chlorophyll a. Trp-671 contacts phylloquinone. Residues 707–727 (LVGLAHFSVGYIFTYAAFLIA) traverse the membrane as a helical segment.

The protein belongs to the PsaA/PsaB family. The PsaA/B heterodimer binds the P700 chlorophyll special pair and subsequent electron acceptors. PSI consists of a core antenna complex that captures photons, and an electron transfer chain that converts photonic excitation into a charge separation. The eukaryotic PSI reaction center is composed of at least 11 subunits. It depends on P700 is a chlorophyll a/chlorophyll a' dimer, A0 is one or more chlorophyll a, A1 is one or both phylloquinones and FX is a shared 4Fe-4S iron-sulfur center. as a cofactor.

Its subcellular location is the plastid. It localises to the chloroplast thylakoid membrane. It catalyses the reaction reduced [plastocyanin] + hnu + oxidized [2Fe-2S]-[ferredoxin] = oxidized [plastocyanin] + reduced [2Fe-2S]-[ferredoxin]. In terms of biological role, psaA and PsaB bind P700, the primary electron donor of photosystem I (PSI), as well as the electron acceptors A0, A1 and FX. PSI is a plastocyanin-ferredoxin oxidoreductase, converting photonic excitation into a charge separation, which transfers an electron from the donor P700 chlorophyll pair to the spectroscopically characterized acceptors A0, A1, FX, FA and FB in turn. Oxidized P700 is reduced on the lumenal side of the thylakoid membrane by plastocyanin. This chain is Photosystem I P700 chlorophyll a apoprotein A2, found in Calycanthus floridus var. glaucus (Eastern sweetshrub).